A 388-amino-acid polypeptide reads, in one-letter code: Succinate--CoA ligase [ADP-forming] subunit beta (388 aa).

Residues 9-244 (KQLFAEYGLP…PSQEDSREAH (236 aa)) form the ATP-grasp domain. Residues K46, 53-55 (GRG), E99, T102, and E107 each bind ATP. Residues N199 and D213 each contribute to the Mg(2+) site. Substrate contacts are provided by residues N264 and 321-323 (GIV).

Belongs to the succinate/malate CoA ligase beta subunit family. In terms of assembly, heterotetramer of two alpha and two beta subunits. Mg(2+) serves as cofactor.

It catalyses the reaction succinate + ATP + CoA = succinyl-CoA + ADP + phosphate. The catalysed reaction is GTP + succinate + CoA = succinyl-CoA + GDP + phosphate. It participates in carbohydrate metabolism; tricarboxylic acid cycle; succinate from succinyl-CoA (ligase route): step 1/1. In terms of biological role, succinyl-CoA synthetase functions in the citric acid cycle (TCA), coupling the hydrolysis of succinyl-CoA to the synthesis of either ATP or GTP and thus represents the only step of substrate-level phosphorylation in the TCA. The beta subunit provides nucleotide specificity of the enzyme and binds the substrate succinate, while the binding sites for coenzyme A and phosphate are found in the alpha subunit. The protein is Succinate--CoA ligase [ADP-forming] subunit beta of Pseudoalteromonas translucida (strain TAC 125).